The following is a 320-amino-acid chain: ATP-dependent 6-phosphofructokinase (320 aa).

G12 lines the ATP pocket. Position 22–26 (22–26 (RGVVR)) interacts with ADP. ATP-binding positions include 73–74 (RF) and 103–106 (GDGS). D104 is a Mg(2+) binding site. 126 to 128 (TID) lines the substrate pocket. The active-site Proton acceptor is the D128. R155 is an ADP binding site. Substrate-binding positions include R163 and 170 to 172 (MGR). Residues 186–188 (GCE), K212, and 214–216 (KKH) each bind ADP. Substrate is bound by residues E223, R244, and 250–253 (HIQR).

The protein belongs to the phosphofructokinase type A (PFKA) family. ATP-dependent PFK group I subfamily. Prokaryotic clade 'B1' sub-subfamily. Homotetramer. It depends on Mg(2+) as a cofactor.

It is found in the cytoplasm. It catalyses the reaction beta-D-fructose 6-phosphate + ATP = beta-D-fructose 1,6-bisphosphate + ADP + H(+). Its pathway is carbohydrate degradation; glycolysis; D-glyceraldehyde 3-phosphate and glycerone phosphate from D-glucose: step 3/4. With respect to regulation, allosterically activated by ADP and other diphosphonucleosides, and allosterically inhibited by phosphoenolpyruvate. In terms of biological role, catalyzes the phosphorylation of D-fructose 6-phosphate to fructose 1,6-bisphosphate by ATP, the first committing step of glycolysis. The chain is ATP-dependent 6-phosphofructokinase from Vibrio campbellii (strain ATCC BAA-1116).